The sequence spans 222 residues: Protein-L-isoaspartate O-methyltransferase (222 aa).

The active site involves Ser67.

The protein belongs to the methyltransferase superfamily. L-isoaspartyl/D-aspartyl protein methyltransferase family.

The protein localises to the cytoplasm. It carries out the reaction [protein]-L-isoaspartate + S-adenosyl-L-methionine = [protein]-L-isoaspartate alpha-methyl ester + S-adenosyl-L-homocysteine. Its function is as follows. Catalyzes the methyl esterification of L-isoaspartyl residues in peptides and proteins that result from spontaneous decomposition of normal L-aspartyl and L-asparaginyl residues. It plays a role in the repair and/or degradation of damaged proteins. In Parvibaculum lavamentivorans (strain DS-1 / DSM 13023 / NCIMB 13966), this protein is Protein-L-isoaspartate O-methyltransferase.